A 272-amino-acid chain; its full sequence is 2-amino-3,7-dideoxy-D-threo-hept-6-ulosonate synthase (272 aa).

Asp33 acts as the Proton acceptor in catalysis. Residues Asp33–Ser37 and Tyr153–Arg155 each bind 1-deoxy-D-threo-hexo-2,5-diulose 6-phosphate. Residue Tyr153 is the Proton donor of the active site. The Schiff-base intermediate with substrate role is filled by Lys184. Residues Gly209–Gly210 and Gly237–Arg238 each bind 1-deoxy-D-threo-hexo-2,5-diulose 6-phosphate.

Belongs to the DeoC/FbaB aldolase family. ADHS subfamily. In terms of assembly, homodecamer.

It catalyses the reaction 1-deoxy-D-threo-hexo-2,5-diulose 6-phosphate + L-aspartate 4-semialdehyde = 2,3-dioxopropyl phosphate + 2-amino-2,3,7-trideoxy-D-lyxo-hept-6-ulosonate. Catalyzes a transaldol reaction between 6-deoxy-5-ketofructose 1-phosphate (DKFP) and L-aspartate semialdehyde (ASA) with an elimination of hydroxypyruvaldehyde phosphate to yield 2-amino-3,7-dideoxy-D-threo-hept-6-ulosonate (ADH). Plays a key role in an alternative pathway of the biosynthesis of 3-dehydroquinate (DHQ), which is involved in the canonical pathway for the biosynthesis of aromatic amino acids. This is 2-amino-3,7-dideoxy-D-threo-hept-6-ulosonate synthase from Methanococcus vannielii (strain ATCC 35089 / DSM 1224 / JCM 13029 / OCM 148 / SB).